The primary structure comprises 120 residues: uncharacterized protein (120 aa).

This is an uncharacterized protein from Archaeoglobus fulgidus (strain ATCC 49558 / DSM 4304 / JCM 9628 / NBRC 100126 / VC-16).